We begin with the raw amino-acid sequence, 362 residues long: Aminomethyltransferase (362 aa).

This sequence belongs to the GcvT family. As to quaternary structure, the glycine cleavage system is composed of four proteins: P, T, L and H.

The catalysed reaction is N(6)-[(R)-S(8)-aminomethyldihydrolipoyl]-L-lysyl-[protein] + (6S)-5,6,7,8-tetrahydrofolate = N(6)-[(R)-dihydrolipoyl]-L-lysyl-[protein] + (6R)-5,10-methylene-5,6,7,8-tetrahydrofolate + NH4(+). Functionally, the glycine cleavage system catalyzes the degradation of glycine. This Colwellia psychrerythraea (strain 34H / ATCC BAA-681) (Vibrio psychroerythus) protein is Aminomethyltransferase.